The sequence spans 923 residues: Tyrosine-protein kinase receptor torso (923 aa).

Residues methionine 1–glutamine 20 form the signal peptide. Topologically, residues glycine 21 to lysine 399 are extracellular. Residues asparagine 37, asparagine 63, asparagine 107, asparagine 142, asparagine 146, asparagine 287, asparagine 298, asparagine 314, asparagine 326, asparagine 342, asparagine 348, and asparagine 377 are each glycosylated (N-linked (GlcNAc...) asparagine). The chain crosses the membrane as a helical span at residues leucine 400 to cysteine 420. At arginine 421–asparagine 923 the chain is on the cytoplasmic side. Residues valine 475–glycine 874 form the Protein kinase domain. ATP is bound by residues leucine 481–valine 489 and lysine 502. Serine 608 carries the phosphoserine modification. A disordered region spans residues tyrosine 656–aspartate 687. The segment covering proline 676–aspartate 687 has biased composition (basic and acidic residues). Aspartate 741 serves as the catalytic Proton acceptor.

Belongs to the protein kinase superfamily. Tyr protein kinase family. Mg(2+) serves as cofactor. May be auto-phosphorylated on tyrosine residues.

The protein localises to the membrane. The catalysed reaction is L-tyrosyl-[protein] + ATP = O-phospho-L-tyrosyl-[protein] + ADP + H(+). Probable receptor tyrosine kinase which is required for determination of anterior and posterior terminal structures in the embryo. During postembryonic development, involved in the initiation of metamorphosis probably by inducing the production of ecdysone in response to prothoracicotropic hormone Ptth. Binding to Ptth stimulates activation of canonical MAPK signaling leading to ERK phosphorylation. This Drosophila melanogaster (Fruit fly) protein is Tyrosine-protein kinase receptor torso (tor).